A 566-amino-acid chain; its full sequence is Endoglucanase G (566 aa).

A signal peptide spans 1–30 (MKKAKAIFSLVVALMVLAIFCFAQNTGSTA). E226 functions as the Proton donor in the catalytic mechanism. The active-site Nucleophile is E381. Residues 473–494 (GTPQASDPPATPTATPTKPAAS) are disordered. Positions 474–494 (TPQASDPPATPTATPTKPAAS) are enriched in low complexity. The Dockerin domain occupies 497-564 (PSFIYGDINS…LLRSIDKLPH (68 aa)).

This sequence belongs to the glycosyl hydrolase 5 (cellulase A) family.

It catalyses the reaction Endohydrolysis of (1-&gt;4)-beta-D-glucosidic linkages in cellulose, lichenin and cereal beta-D-glucans.. This enzyme catalyzes the endohydrolysis of 1,4-beta-glucosidic linkages in cellulose, lichenin and cereal beta-D-glucans. This is Endoglucanase G (celG) from Acetivibrio thermocellus (strain ATCC 27405 / DSM 1237 / JCM 9322 / NBRC 103400 / NCIMB 10682 / NRRL B-4536 / VPI 7372) (Clostridium thermocellum).